A 30-amino-acid chain; its full sequence is GIPCGESCVFIPCVTTVIGCSCKDKVCYNN.

A cross-link (cyclopeptide (Gly-Asn)) is located at residues 1-30 (GIPCGESCVFIPCVTTVIGCSCKDKVCYNN). 3 disulfide bridges follow: Cys-4-Cys-20, Cys-8-Cys-22, and Cys-13-Cys-27.

Post-translationally, this is a cyclic peptide.

Probably participates in a plant defense mechanism. In Chassalia chartacea (Chassalia curviflora), this protein is Chassatide C9.